A 102-amino-acid chain; its full sequence is Probable endoribonuclease MazF2 (102 aa).

It belongs to the PemK/MazF family. In terms of assembly, forms a complex with cognate antitoxin MazE2.

Its function is as follows. Toxic component of a type II toxin-antitoxin (TA) system. Acts as an endoribonuclease. Neutralized by coexpression with cognate antitoxin MazE2. This Mycobacterium tuberculosis (strain CDC 1551 / Oshkosh) protein is Probable endoribonuclease MazF2 (mazF2).